Consider the following 224-residue polypeptide: 2-C-methyl-D-erythritol 4-phosphate cytidylyltransferase (224 aa).

The protein belongs to the IspD/TarI cytidylyltransferase family. IspD subfamily.

The catalysed reaction is 2-C-methyl-D-erythritol 4-phosphate + CTP + H(+) = 4-CDP-2-C-methyl-D-erythritol + diphosphate. It participates in isoprenoid biosynthesis; isopentenyl diphosphate biosynthesis via DXP pathway; isopentenyl diphosphate from 1-deoxy-D-xylulose 5-phosphate: step 2/6. Its function is as follows. Catalyzes the formation of 4-diphosphocytidyl-2-C-methyl-D-erythritol from CTP and 2-C-methyl-D-erythritol 4-phosphate (MEP). The chain is 2-C-methyl-D-erythritol 4-phosphate cytidylyltransferase from Bordetella petrii (strain ATCC BAA-461 / DSM 12804 / CCUG 43448).